Consider the following 344-residue polypeptide: GTP 3',8-cyclase (344 aa).

The Radical SAM core domain maps to proline 19–proline 244. Residue arginine 28 coordinates GTP. Residues cysteine 35 and cysteine 39 each contribute to the [4Fe-4S] cluster site. An S-adenosyl-L-methionine-binding site is contributed by tyrosine 41. Cysteine 42 provides a ligand contact to [4Fe-4S] cluster. Arginine 77 lines the GTP pocket. S-adenosyl-L-methionine is bound at residue glycine 81. GTP is bound at residue threonine 110. Serine 134 lines the S-adenosyl-L-methionine pocket. GTP is bound at residue lysine 170. Residue methionine 204 coordinates S-adenosyl-L-methionine. Residues cysteine 268 and cysteine 271 each coordinate [4Fe-4S] cluster. Arginine 273–arginine 275 contacts GTP. Cysteine 285 is a binding site for [4Fe-4S] cluster.

It belongs to the radical SAM superfamily. MoaA family. As to quaternary structure, monomer and homodimer. [4Fe-4S] cluster is required as a cofactor.

It catalyses the reaction GTP + AH2 + S-adenosyl-L-methionine = (8S)-3',8-cyclo-7,8-dihydroguanosine 5'-triphosphate + 5'-deoxyadenosine + L-methionine + A + H(+). Its pathway is cofactor biosynthesis; molybdopterin biosynthesis. Its function is as follows. Catalyzes the cyclization of GTP to (8S)-3',8-cyclo-7,8-dihydroguanosine 5'-triphosphate. This is GTP 3',8-cyclase from Paracoccus denitrificans (strain Pd 1222).